Here is a 119-residue protein sequence, read N- to C-terminus: UPF0102 protein SGR_1878 (119 aa).

It belongs to the UPF0102 family.

This is UPF0102 protein SGR_1878 from Streptomyces griseus subsp. griseus (strain JCM 4626 / CBS 651.72 / NBRC 13350 / KCC S-0626 / ISP 5235).